The following is a 1012-amino-acid chain: DNA polymerase gamma (1012 aa).

This sequence belongs to the DNA polymerase type-A family. The cofactor is Mg(2+).

It localises to the mitochondrion. It carries out the reaction DNA(n) + a 2'-deoxyribonucleoside 5'-triphosphate = DNA(n+1) + diphosphate. In terms of biological role, involved in the replication of mitochondrial DNA. This Komagataella pastoris (Yeast) protein is DNA polymerase gamma (MIP1).